Reading from the N-terminus, the 324-residue chain is CIMIP2 protein GA14893 (324 aa).

This sequence belongs to the CIMIP2 family.

It is found in the cytoplasm. It localises to the cytoskeleton. Its subcellular location is the cilium axoneme. Functionally, probable microtubule inner protein (MIP) part of the dynein-decorated doublet microtubules (DMTs) in cilium axoneme. The protein is CIMIP2 protein GA14893 of Drosophila pseudoobscura pseudoobscura (Fruit fly).